A 250-amino-acid polypeptide reads, in one-letter code: GTP cyclohydrolase 1 (250 aa).

Basic and acidic residues-rich tracts occupy residues 1-14 (MEKG…EKPR) and 35-44 (PAEKPPRPEA). The tract at residues 1–64 (MEKGPVRAPA…GERPRSEEDN (64 aa)) is disordered. 2 positions are modified to phosphoserine: serine 60 and serine 81. Zn(2+)-binding residues include cysteine 141, histidine 144, and cysteine 212.

This sequence belongs to the GTP cyclohydrolase I family. As to quaternary structure, toroid-shaped homodecamer, composed of a dimer of pentamers. The inactive isoforms also form decamers and may possibly be incorporated into GCH1 heterodecamers, decreasing enzyme stability and activity. Interacts with AHSA1 and GCHFR/GFRP. In terms of processing, phosphorylated by casein kinase II at Ser-81 in HAECs during oscillatory shear stress; phosphorylation at Ser-81 results in increased enzyme activity. In epidermis, expressed predominantly in basal undifferentiated keratinocytes and in some but not all melanocytes (at protein level).

It is found in the cytoplasm. It localises to the nucleus. The catalysed reaction is GTP + H2O = 7,8-dihydroneopterin 3'-triphosphate + formate + H(+). It participates in cofactor biosynthesis; 7,8-dihydroneopterin triphosphate biosynthesis; 7,8-dihydroneopterin triphosphate from GTP: step 1/1. Its activity is regulated as follows. GTP shows a positive allosteric effect, and tetrahydrobiopterin inhibits the enzyme activity. Zinc is required for catalytic activity. Inhibited by Mg(2+). In terms of biological role, positively regulates nitric oxide synthesis in umbilical vein endothelial cells (HUVECs). May be involved in dopamine synthesis. May modify pain sensitivity and persistence. Isoform GCH-1 is the functional enzyme, the potential function of the enzymatically inactive isoforms remains unknown. The polypeptide is GTP cyclohydrolase 1 (GCH1) (Homo sapiens (Human)).